The primary structure comprises 201 residues: Ubiquinone biosynthesis accessory factor UbiJ (201 aa).

Positions 15–112 (LNTFLYRSPA…QVVQNFVALA (98 aa)) constitute an SCP2 domain.

This sequence belongs to the UbiJ family. In terms of assembly, component of the Ubi complex metabolon, which regroups five ubiquinone biosynthesis proteins (UbiE, UbiF, UbiG, UbiH and UbiI) and two accessory factors (UbiK and the lipid-binding protein UbiJ). Interacts with UbiK and forms a complex composed of 2 UbiK subunits and 1 UbiJ subunit. The UbiK-UbiJ complex interacts with palmitoleic acid.

The protein localises to the cytoplasm. It participates in cofactor biosynthesis; ubiquinone biosynthesis. Required for ubiquinone (coenzyme Q) biosynthesis under aerobic conditions. Binds hydrophobic ubiquinone biosynthetic intermediates via its SCP2 domain and is essential for the stability of the Ubi complex. May constitute a docking platform where Ubi enzymes assemble and access their SCP2-bound polyprenyl substrates. In Escherichia coli (strain K12), this protein is Ubiquinone biosynthesis accessory factor UbiJ.